The sequence spans 129 residues: Small ribosomal subunit protein eS6 (129 aa).

Positions 106–129 are disordered; the sequence is QINASIVSRGEQSIDDLLGGEDDE.

The protein belongs to the eukaryotic ribosomal protein eS6 family.

The sequence is that of Small ribosomal subunit protein eS6 from Natronomonas pharaonis (strain ATCC 35678 / DSM 2160 / CIP 103997 / JCM 8858 / NBRC 14720 / NCIMB 2260 / Gabara) (Halobacterium pharaonis).